The following is a 448-amino-acid chain: Late embryogenesis abundant protein ECP63 (448 aa).

Basic and acidic residues-rich tracts occupy residues 282-326 (TEEA…EEAG) and 334-354 (QKTR…KDSA). 2 disordered regions span residues 282–360 (TEEA…RGNE) and 411–448 (SKPG…KGKL). The stretch at 297–331 (KENMEKAGEVTRQKMEEMRLEGKELKEEAGAKAQE) forms a coiled coil. Polar residues predominate over residues 420-432 (LKASDQMTGQTFN). A compositionally biased stretch (basic and acidic residues) spans 435 to 448 (GRMDDDARKDKGKL).

Belongs to the LEA type 4 family. In terms of tissue distribution, expressed in mature seeds.

In terms of biological role, may be involved in the BHLH109-mediated regulation of somatic embryogenesis. In Arabidopsis thaliana (Mouse-ear cress), this protein is Late embryogenesis abundant protein ECP63.